We begin with the raw amino-acid sequence, 289 residues long: tRNA pseudouridine synthase B (289 aa).

The Nucleophile role is filled by aspartate 38.

Belongs to the pseudouridine synthase TruB family. Type 1 subfamily.

The catalysed reaction is uridine(55) in tRNA = pseudouridine(55) in tRNA. Responsible for synthesis of pseudouridine from uracil-55 in the psi GC loop of transfer RNAs. In Clostridium kluyveri (strain ATCC 8527 / DSM 555 / NBRC 12016 / NCIMB 10680 / K1), this protein is tRNA pseudouridine synthase B.